Reading from the N-terminus, the 337-residue chain is Probable cytosolic iron-sulfur protein assembly protein 1 (337 aa).

WD repeat units follow at residues 11–50 (LHND…ENLL), 57–96 (VHKK…LEEG), 109–148 (GHEN…EEYE), 155–194 (EHSQ…WECA), 199–240 (GHEG…EDDQ), 252–290 (AHRS…SEVS), and 301–337 (AHTV…NYQD).

It belongs to the WD repeat CIA1 family. Interacts with NAR1.

It is found in the cytoplasm. The protein resides in the nucleus. In terms of biological role, essential component of the cytosolic iron-sulfur (Fe/S) protein assembly machinery. Required for the maturation of extramitochondrial Fe/S proteins. The chain is Probable cytosolic iron-sulfur protein assembly protein 1 from Candida glabrata (strain ATCC 2001 / BCRC 20586 / JCM 3761 / NBRC 0622 / NRRL Y-65 / CBS 138) (Yeast).